Here is a 656-residue protein sequence, read N- to C-terminus: Receptor-type tyrosine-protein phosphatase R (656 aa).

An N-terminal signal peptide occupies residues 1 to 23 (MRRAVGFPALCLLLNLHAAGCFS). An O-linked (Xyl...) (chondroitin sulfate) serine glycan is attached at Ser-23. The Extracellular portion of the chain corresponds to 24 to 226 (RNNDHFLAIR…EADKIWSKEG (203 aa)). The N-linked (GlcNAc...) asparagine glycan is linked to Asn-128. The helical transmembrane segment at 227 to 247 (FYAVVIFLSIFIIIVTCLMII) threads the bilayer. Topologically, residues 248–656 (YRLKERLQLS…ESRLSPETVE (409 aa)) are cytoplasmic. A disordered region spans residues 269–289 (HLSPIARQQAQSEAKTTHSMV). Ser-271 is modified (phosphoserine). A compositionally biased stretch (polar residues) spans 274 to 289 (ARQQAQSEAKTTHSMV). The residue at position 338 (Ser-338) is a Phosphoserine; by PKA. Residues 392–646 (LQSEFMEIPM…EFVHHALCLF (255 aa)) enclose the Tyrosine-protein phosphatase domain. Residues Asp-553, 587–593 (CSAGIGR), and Gln-631 each bind substrate. The active-site Phosphocysteine intermediate is the Cys-587.

The protein belongs to the protein-tyrosine phosphatase family. Receptor class 7 subfamily. In terms of assembly, interacts with MAPKs. Expressed in the heart, brain, spleen, lung, liver, skeletal muscle, kidney and testis. Isoform alpha is expressed throughout the granular layer of the cerebellar but not within the Purkinje cells, also in the villi of the ileum and jejunum and both the villi and crypts of the duodenum. Isoform beta is expressed only in the Purkinje cells. Isoform gamma is expressed throughout the brain, the villi and crypts of the duodenum, jejunum and ileum and expressed at low levels in the proximal colon.

The protein localises to the cell membrane. The protein resides in the cytoplasm. The enzyme catalyses O-phospho-L-tyrosyl-[protein] + H2O = L-tyrosyl-[protein] + phosphate. Sequesters mitogen-activated protein kinases (MAPKs) such as MAPK1, MAPK3 and MAPK14 in the cytoplasm in an inactive form. The MAPKs bind to a dephosphorylated kinase interacting motif, phosphorylation of which by the protein kinase A complex releases the MAPKs for activation and translocation into the nucleus. Isoform gamma may have a role in patterning and cellular proliferation of skeletal elements in the precartilaginous/cartilaginous skeleton. This is Receptor-type tyrosine-protein phosphatase R (Ptprr) from Mus musculus (Mouse).